The chain runs to 169 residues: Probable metallophosphoesterase YsnB (169 aa).

Mn(2+) contacts are provided by Asp8, His10, Asp35, Asn54, His78, His107, and His109.

It belongs to the metallophosphoesterase superfamily. YfcE family. Mn(2+) is required as a cofactor.

The polypeptide is Probable metallophosphoesterase YsnB (ysnB) (Bacillus subtilis (strain 168)).